Consider the following 127-residue polypeptide: Small ribosomal subunit protein uS13 (127 aa).

This sequence belongs to the universal ribosomal protein uS13 family. Part of the 30S ribosomal subunit. Forms a loose heterodimer with protein S19. Forms two bridges to the 50S subunit in the 70S ribosome.

Functionally, located at the top of the head of the 30S subunit, it contacts several helices of the 16S rRNA. In the 70S ribosome it contacts the 23S rRNA (bridge B1a) and protein L5 of the 50S subunit (bridge B1b), connecting the 2 subunits; these bridges are implicated in subunit movement. Contacts the tRNAs in the A and P-sites. The chain is Small ribosomal subunit protein uS13 from Pelagibacter ubique (strain HTCC1062).